The primary structure comprises 506 residues: Serine/threonine-protein kinase RIO1 (506 aa).

A disordered region spans residues 22–52 (TASSSSDDEPEQAVVKQEKLEAGEQIEEQYD). The Protein kinase domain maps to 142 to 506 (LNIDGCISTG…KKRAHRQHMK (365 aa)). ATP is bound by residues 148-156 (ISTGKEANV), lysine 169, and leucine 241. Catalysis depends on aspartate 285, which acts as the Proton acceptor. Asparagine 290 provides a ligand contact to ATP. Mg(2+) is bound by residues asparagine 290 and aspartate 302. Residue aspartate 302 is the 4-aspartylphosphate intermediate of the active site. The tract at residues 418 to 506 (GDGFGEEHDD…KKRAHRQHMK (89 aa)) is disordered. Over residues 424–435 (EHDDSDDNDDEE) the composition is skewed to acidic residues. Residues 454–490 (EKERKIAMHTRNREETAEERKERKAAVKEEKREQRKE) show a composition bias toward basic and acidic residues. A compositionally biased stretch (basic residues) spans 491 to 506 (KIPKHLKKRAHRQHMK).

This sequence belongs to the protein kinase superfamily. RIO-type Ser/Thr kinase family. The cofactor is Mg(2+). In terms of tissue distribution, expressed in vulva and uterine cells, uterine seam cells (utse), spermatheca and in the nervous system including chemosensory neurons in the head, nerve ring neurons (RID/RIF), inhibitory motor neurons (DA/DD/VA/VD), mechanosensory neurons (ALML/PLML) and tail sensory neurons (DVA//PDA). Also expressed in intestine and pharynx (procorpus) and rectal valve and gland.

Its subcellular location is the cytoplasm. The enzyme catalyses L-seryl-[protein] + ATP = O-phospho-L-seryl-[protein] + ADP + H(+). The catalysed reaction is L-threonyl-[protein] + ATP = O-phospho-L-threonyl-[protein] + ADP + H(+). Its function is as follows. Involved in the final steps of cytoplasmic maturation of the 40S ribosomal subunit. Despite the protein kinase domain is proposed to act predominantly as an ATPase. The catalytic activity regulates its dynamic association with the 40S subunit. Plays a role in oogenesis by regulating germ cell proliferation, progression through diplotene and diakinesis stages and oocyte maturation. Regulates germline development probably by regulating the phosphorylation of mpk-1. Involved in larval development. This chain is Serine/threonine-protein kinase RIO1, found in Caenorhabditis elegans.